Reading from the N-terminus, the 203-residue chain is Small ribosomal subunit protein uS4c (203 aa).

Residues 18–42 form a disordered region; that stretch reads LPGLTSKRPKNRKDSMNMNRSSSRK. Residues 33-42 show a composition bias toward polar residues; that stretch reads MNMNRSSSRK. Residues 91-152 form the S4 RNA-binding domain; it reads MRLDNIIFRL…QPRLRAIIKK (62 aa).

This sequence belongs to the universal ribosomal protein uS4 family. In terms of assembly, part of the 30S ribosomal subunit. Contacts protein S5. The interaction surface between S4 and S5 is involved in control of translational fidelity.

It is found in the plastid. Its subcellular location is the chloroplast. One of the primary rRNA binding proteins, it binds directly to 16S rRNA where it nucleates assembly of the body of the 30S subunit. In terms of biological role, with S5 and S12 plays an important role in translational accuracy. The sequence is that of Small ribosomal subunit protein uS4c (rps4) from Pinus koraiensis (Korean pine).